The sequence spans 118 residues: Urease subunit beta (118 aa).

Belongs to the urease beta subunit family. Heterotrimer of UreA (gamma), UreB (beta) and UreC (alpha) subunits. Three heterotrimers associate to form the active enzyme.

The protein localises to the cytoplasm. The catalysed reaction is urea + 2 H2O + H(+) = hydrogencarbonate + 2 NH4(+). The protein operates within nitrogen metabolism; urea degradation; CO(2) and NH(3) from urea (urease route): step 1/1. The chain is Urease subunit beta from Aliivibrio fischeri (strain MJ11) (Vibrio fischeri).